Here is a 644-residue protein sequence, read N- to C-terminus: Transmembrane 9 superfamily member 9 (644 aa).

An N-terminal signal peptide occupies residues 1–27 (MEFYRSSRRLQILGSVILLLSIHVAHS). Topologically, residues 28 to 281 (FYLPGVAPQD…YLLMSDNQIH (254 aa)) are lumenal. Residues 282 to 302 (WFSIVNSLMIVLFLSGMVAMI) traverse the membrane as a helical segment. Residues 303–351 (MLRTLYRDISRYNELETQEEAQEETGWKLVHGDVFRPPANSDLLCVYVG) are Cytoplasmic-facing. Residues 352 to 372 (TGVQCLGMVLVTMIFAMLGFL) traverse the membrane as a helical segment. Topologically, residues 373-377 (SPSNR) are lumenal. Residues 378-398 (GGLMTAMLLLWVFMGLFAGYA) form a helical membrane-spanning segment. At 399-418 (SSRLYKMFKGTEWKRIAFRT) the chain is on the cytoplasmic side. A helical membrane pass occupies residues 419–439 (AFLFPAVVSAIFFVLNALIWG). The Lumenal segment spans residues 440–451 (QKSSGAVPFGTM). A helical transmembrane segment spans residues 452–472 (FALIFLWFGISVPLVFVGAYL). The Cytoplasmic segment spans residues 473-501 (GFKKPPLDDPVKTNKIPRQIPEQAWYMNP). A helical transmembrane segment spans residues 502–522 (IFSILIGGILPFGAVFIELFF). At 523 to 534 (ILTSIWLNQFYY) the chain is on the lumenal side. Residues 535–555 (IFGFLFLVFVILMVTCAEITI) traverse the membrane as a helical segment. Over 556 to 573 (VLCYFQLCSEDYLWWWRS) the chain is Cytoplasmic. Residues 574–594 (YLTSGSSAVYLFLYAAFYFFT) form a helical membrane-spanning segment. Residues 595 to 600 (KLQITK) are Lumenal-facing. The helical transmembrane segment at 601 to 621 (LVSAMLYFGYMLIASYAFFVL) threads the bilayer. Residues 622–644 (TGTIGFYACLWFTRLIYSSVKID) are Cytoplasmic-facing. The short motif at 633–638 (FTRLIY) is the Endoplasmic reticulum export signal element. Residues 642–644 (KID) carry the Golgi retention signal motif.

It belongs to the nonaspanin (TM9SF) (TC 9.A.2) family.

Its subcellular location is the endosome membrane. The protein resides in the golgi apparatus membrane. This Arabidopsis thaliana (Mouse-ear cress) protein is Transmembrane 9 superfamily member 9.